A 248-amino-acid chain; its full sequence is Ubiquinone biosynthesis O-methyltransferase (248 aa).

S-adenosyl-L-methionine contacts are provided by Arg41, Gly72, Asp93, and Met136.

The protein belongs to the methyltransferase superfamily. UbiG/COQ3 family.

The enzyme catalyses a 3-demethylubiquinol + S-adenosyl-L-methionine = a ubiquinol + S-adenosyl-L-homocysteine + H(+). It carries out the reaction a 3-(all-trans-polyprenyl)benzene-1,2-diol + S-adenosyl-L-methionine = a 2-methoxy-6-(all-trans-polyprenyl)phenol + S-adenosyl-L-homocysteine + H(+). It functions in the pathway cofactor biosynthesis; ubiquinone biosynthesis. Its function is as follows. O-methyltransferase that catalyzes the 2 O-methylation steps in the ubiquinone biosynthetic pathway. The chain is Ubiquinone biosynthesis O-methyltransferase from Sinorhizobium fredii (strain NBRC 101917 / NGR234).